The chain runs to 130 residues: Small ribosomal subunit protein bS6 (130 aa).

The interval 100 to 130 (SPMVKAKDERRERHDFASEANDDSEAGDSEE) is disordered. A compositionally biased stretch (basic and acidic residues) spans 104-116 (KAKDERRERHDFA). A compositionally biased stretch (acidic residues) spans 119–130 (ANDDSEAGDSEE).

It belongs to the bacterial ribosomal protein bS6 family.

In terms of biological role, binds together with bS18 to 16S ribosomal RNA. The chain is Small ribosomal subunit protein bS6 from Yersinia pestis (strain Pestoides F).